Reading from the N-terminus, the 400-residue chain is Formate-dependent phosphoribosylglycinamide formyltransferase (400 aa).

Residues 22-23 (EL) and glutamate 82 contribute to the N(1)-(5-phospho-beta-D-ribosyl)glycinamide site. ATP is bound by residues arginine 115, lysine 156, 161–166 (SSGKGQ), 196–199 (EGFI), and glutamate 204. An ATP-grasp domain is found at 120–309 (RLAAETLGLP…EFALHARAIL (190 aa)). Glutamate 268 and glutamate 280 together coordinate Mg(2+). N(1)-(5-phospho-beta-D-ribosyl)glycinamide-binding positions include aspartate 287, lysine 361, and 368 to 369 (RR).

Belongs to the PurK/PurT family. Homodimer.

It carries out the reaction N(1)-(5-phospho-beta-D-ribosyl)glycinamide + formate + ATP = N(2)-formyl-N(1)-(5-phospho-beta-D-ribosyl)glycinamide + ADP + phosphate + H(+). It functions in the pathway purine metabolism; IMP biosynthesis via de novo pathway; N(2)-formyl-N(1)-(5-phospho-D-ribosyl)glycinamide from N(1)-(5-phospho-D-ribosyl)glycinamide (formate route): step 1/1. Its function is as follows. Involved in the de novo purine biosynthesis. Catalyzes the transfer of formate to 5-phospho-ribosyl-glycinamide (GAR), producing 5-phospho-ribosyl-N-formylglycinamide (FGAR). Formate is provided by PurU via hydrolysis of 10-formyl-tetrahydrofolate. This Xanthomonas campestris pv. campestris (strain 8004) protein is Formate-dependent phosphoribosylglycinamide formyltransferase.